A 97-amino-acid chain; its full sequence is Co-chaperonin GroES (97 aa).

Belongs to the GroES chaperonin family. As to quaternary structure, heptamer of 7 subunits arranged in a ring. Interacts with the chaperonin GroEL.

Its subcellular location is the cytoplasm. Functionally, together with the chaperonin GroEL, plays an essential role in assisting protein folding. The GroEL-GroES system forms a nano-cage that allows encapsulation of the non-native substrate proteins and provides a physical environment optimized to promote and accelerate protein folding. GroES binds to the apical surface of the GroEL ring, thereby capping the opening of the GroEL channel. The protein is Co-chaperonin GroES of Yersinia pseudotuberculosis serotype O:1b (strain IP 31758).